A 308-amino-acid polypeptide reads, in one-letter code: Oxygen-dependent coproporphyrinogen-III oxidase (308 aa).

Ser-92 lines the substrate pocket. Residues His-96 and His-106 each contribute to the a divalent metal cation site. The Proton donor role is filled by His-106. Residue 108–110 participates in substrate binding; the sequence is NVR. Residues His-145 and His-175 each contribute to the a divalent metal cation site. Residues 240–275 form an important for dimerization region; the sequence is YVEFNLVWDRGTLFGLQTGGRTESILMSMPPLVRWE. Substrate is bound at residue 258–260; the sequence is GGR.

The protein belongs to the aerobic coproporphyrinogen-III oxidase family. Homodimer. A divalent metal cation serves as cofactor.

It is found in the cytoplasm. The enzyme catalyses coproporphyrinogen III + O2 + 2 H(+) = protoporphyrinogen IX + 2 CO2 + 2 H2O. It functions in the pathway porphyrin-containing compound metabolism; protoporphyrin-IX biosynthesis; protoporphyrinogen-IX from coproporphyrinogen-III (O2 route): step 1/1. Its function is as follows. Involved in the heme biosynthesis. Catalyzes the aerobic oxidative decarboxylation of propionate groups of rings A and B of coproporphyrinogen-III to yield the vinyl groups in protoporphyrinogen-IX. This chain is Oxygen-dependent coproporphyrinogen-III oxidase, found in Salmonella paratyphi A (strain ATCC 9150 / SARB42).